The chain runs to 100 residues: Mitochondrial import inner membrane translocase subunit Tim10 B (100 aa).

Positions 25–49 (CFQRCVPSLHHRALDAEEEACLHSC) match the Twin CX3C motif motif. 2 disulfides stabilise this stretch: cysteine 25–cysteine 49 and cysteine 29–cysteine 45.

The protein belongs to the small Tim family. In terms of assembly, component of the TIM22 complex, which core is composed of TIMM22, associated with TIMM10 (TIMM10A and/or TIMM10B), TIMM9, AGK and TIMM29.

It is found in the mitochondrion inner membrane. Its function is as follows. Component of the TIM22 complex, a complex that mediates the import and insertion of multi-pass transmembrane proteins into the mitochondrial inner membrane. The TIM22 complex forms a twin-pore translocase that uses the membrane potential as the external driving force. In the TIM22 complex, it may act as a docking point for the soluble 70 kDa complex that guides the target proteins in transit through the aqueous mitochondrial intermembrane space. The chain is Mitochondrial import inner membrane translocase subunit Tim10 B (Timm10b) from Mus musculus (Mouse).